The sequence spans 511 residues: ESX-1 secretion system protein EccD1 (511 aa).

Serine 2 carries the N-acetylserine modification. Residues 2–143 (SAPAVAAGPT…PEFDRTALNR (142 aa)) are Cytoplasmic-facing. Residues 144-164 (FVGAAIPLLTAPVIGMAMRAW) form a helical membrane-spanning segment. Topologically, residues 165–170 (WETGRS) are periplasmic. A helical membrane pass occupies residues 171–191 (LWWPLAIGILGIAVLVGSFVA). Residues 192–202 (NRFYQSGHLAE) lie on the Cytoplasmic side of the membrane. The helical transmembrane segment at 203–223 (CLLVTTYLLIATAAALAVPLP) threads the bilayer. Over 224-227 (RGVN) the chain is Periplasmic. Residues 228–248 (SLGAPQVAGAATAVLFLTLMT) form a helical membrane-spanning segment. Residues 249-257 (RGGPRKRHE) are Cytoplasmic-facing. A helical transmembrane segment spans residues 258 to 278 (LASFAVITAIAVIAAAAAFGY). Residues 279–285 (GYQDWVP) are Periplasmic-facing. The helical transmembrane segment at 286–306 (AGGIAFGLFIVTNAAKLTVAV) threads the bilayer. Over 307-367 (ARIALPPIPV…TERSKLAKQL (61 aa)) the chain is Cytoplasmic. The next 2 helical transmembrane spans lie at 368-388 (LIGYVTSGTLILAAGAIAVVV) and 389-409 (RGHFFVHSLVVAGLITTVCGF). At 410-420 (RSRLYAERWCA) the chain is on the cytoplasmic side. Residues 421–441 (WALLAATVAIPTGLTAKLIIW) traverse the membrane as a helical segment. Topologically, residues 442–444 (YPH) are periplasmic. A helical transmembrane segment spans residues 445–465 (YAWLLLSVYLTVALVALVVVG). Topologically, residues 466–482 (SMAHVRRVSPVVKRTLE) are cytoplasmic. Residues 483-503 (LIDGAMIAAIIPMLLWITGVY) form a helical membrane-spanning segment. Residues 504–511 (DTVRNIRF) are Periplasmic-facing.

The protein belongs to the EccD/Snm4 family. In terms of assembly, possibly a homodimer. Part of the ESX-1 / type VII secretion system (T7SS), which is composed of cytosolic and membrane components. The ESX-1 membrane complex is composed of EccB1, EccCa1, EccCb1, EccD1 and EccE1.

It localises to the cell inner membrane. In terms of biological role, part of the ESX-1 specialized secretion system, which delivers several virulence factors to host cells during infection, including the key virulence factors EsxA (ESAT-6) and EsxB (CFP-10). The sequence is that of ESX-1 secretion system protein EccD1 from Mycobacterium tuberculosis (strain ATCC 25618 / H37Rv).